A 181-amino-acid polypeptide reads, in one-letter code: Oligoribonuclease (181 aa).

One can recognise an Exonuclease domain in the interval 8-171; it reads LIWIDLEMTG…DDIRESVAEL (164 aa). The active site involves Tyr-129.

The protein belongs to the oligoribonuclease family. As to quaternary structure, homodimer.

The protein localises to the cytoplasm. Functionally, 3'-to-5' exoribonuclease specific for small oligoribonucleotides. The polypeptide is Oligoribonuclease (Escherichia coli O157:H7).